Reading from the N-terminus, the 238-residue chain is UDP-2,3-diacylglucosamine hydrolase (238 aa).

Residues Asp8, His10, Asp41, Asn78, and His113 each coordinate Mn(2+). Residue 78–79 (NR) participates in substrate binding. Residues Asp121, Ser159, Asn163, Lys166, and His194 each contribute to the substrate site. Residues His194 and His196 each contribute to the Mn(2+) site.

It belongs to the LpxH family. Mn(2+) serves as cofactor.

The protein resides in the cell inner membrane. The enzyme catalyses UDP-2-N,3-O-bis[(3R)-3-hydroxytetradecanoyl]-alpha-D-glucosamine + H2O = 2-N,3-O-bis[(3R)-3-hydroxytetradecanoyl]-alpha-D-glucosaminyl 1-phosphate + UMP + 2 H(+). It functions in the pathway glycolipid biosynthesis; lipid IV(A) biosynthesis; lipid IV(A) from (3R)-3-hydroxytetradecanoyl-[acyl-carrier-protein] and UDP-N-acetyl-alpha-D-glucosamine: step 4/6. In terms of biological role, hydrolyzes the pyrophosphate bond of UDP-2,3-diacylglucosamine to yield 2,3-diacylglucosamine 1-phosphate (lipid X) and UMP by catalyzing the attack of water at the alpha-P atom. Involved in the biosynthesis of lipid A, a phosphorylated glycolipid that anchors the lipopolysaccharide to the outer membrane of the cell. The chain is UDP-2,3-diacylglucosamine hydrolase from Shewanella piezotolerans (strain WP3 / JCM 13877).